A 719-amino-acid chain; its full sequence is MNTIDTVVPEMNPALSESIVFAPIRTGEEGEKIPIIPINAALSESIVFSPIPPPPSTTDNTTNTTTTTIETTATDNTNDTEEKQENIENNNNNNNSSISSPNSIDGANKKDSIELEEDKEHSIKRKDGSLGDVVDNEKIIPNSLDSDAPEETSNLNKKSEINIKQVLKNPSFDATNDNHNPQEVDNTDNPDKPTTPRQTTTTTTTTTTTTSTNSTSNKLPNNGDNTVSFDEKFDPNVSHSNLNDDYKASGSSDSPNRVRLNTSQRLKMYKQKSEKRLSHRPKSIKLEHKKNVLGEIIYKGHPSWALMLNIQTGIRNAVGKSMGTEGGVNAKTPQQYHTLRKPSEFKRKEDFYVSPKTQRFESAGTAMTNAHSTGAFKFKDYCPNAFRYLRYLFGIDTADFMVSLCNTLKNGENALRELPTPGKSGSLFFFSHDMKFIIKTIPKDEAKLLRDILPSYLEHIQSNPNSLLPRFFGLYRVKPHSGRQVRFVIMGNLFPTKKKIHERYDLKGSVVGREASVDEKKSDSVTFKDIDFRNRKQKIFLGPGKKQSFIDQIKRDCKLLQSLNIMDYSLLIGIHYPHRENEPPSPSLLRSTLEDSSDFESPSMEQSSAGQQQQQRGSGNYDNSGAGRDSTTGGAAPKENDEIYISAFQQDEGGIKSQGGDTEEHYFLGIIDILMLYSLRKKVEHTYKTLKFGAKQEISSVSPDEYSERFQEFLSTIIE.

The tract at residues 47 to 261 is disordered; it reads VFSPIPPPPS…SDSPNRVRLN (215 aa). Low complexity-rich tracts occupy residues 57–77 and 87–104; these read TTDNTTNTTTTTIETTATDNT and IENNNNNNNSSISSPNSI. Basic and acidic residues predominate over residues 107-129; sequence ANKKDSIELEEDKEHSIKRKDGS. Positions 172–184 are enriched in polar residues; that stretch reads FDATNDNHNPQEV. Positions 199–217 are enriched in low complexity; the sequence is TTTTTTTTTTTTSTNSTSN. Polar residues-rich tracts occupy residues 218–228 and 248–261; these read KLPNNGDNTVS and ASGSSDSPNRVRLN. Thr-262 is subject to Phosphothreonine. A PIPK domain is found at 316–718; the sequence is NAVGKSMGTE…RFQEFLSTII (403 aa). A disordered region spans residues 579–638; it reads RENEPPSPSLLRSTLEDSSDFESPSMEQSSAGQQQQQRGSGNYDNSGAGRDSTTGGAAPK. Over residues 606-619 the composition is skewed to low complexity; that stretch reads QSSAGQQQQQRGSG.

In terms of processing, phosphorylated at Thr-262 by pkgB.

May be involved in signaling events that underlie chemotaxis via the chemoattractant-mediated pkgB phosphorylation. The polypeptide is Probable phosphatidylinositol phosphate kinase DDB_G0267588 (Dictyostelium discoideum (Social amoeba)).